A 318-amino-acid polypeptide reads, in one-letter code: Pantothenate kinase (318 aa).

96-103 provides a ligand contact to ATP; it reads GSVAVGKS.

Belongs to the prokaryotic pantothenate kinase family.

The protein resides in the cytoplasm. The enzyme catalyses (R)-pantothenate + ATP = (R)-4'-phosphopantothenate + ADP + H(+). It participates in cofactor biosynthesis; coenzyme A biosynthesis; CoA from (R)-pantothenate: step 1/5. The protein is Pantothenate kinase of Rhodopseudomonas palustris (strain BisB5).